Consider the following 809-residue polypeptide: MSVRTKVLGLVDVMMRVPPVMVIDEILKMDMGMQSWLYPDKDKASGALATPTEAPAVPSGQDPFTSIKELFSHMTTSAQSVLEQSIEKASEAAKTHGMLSSGFNSLMNELSKDQTLADVLSTTTVKFVLCVFAFLSAACIFMLWTRHLVMVYMFLTSLGLTFLSYWSNVSALALTERSPSMVEDLMSLNTTRLLDSGGVVMSLAPHLMAQWFMGMLFAYIHLGPRFEHVQRSMPIIFASPILLAMLPLPAKVVQHLPVVAVFTPIILTKITLMQSAMEASRTVYNGYQYAMNFVSNFGLSALIENEWQRLNVPNVLRVFWTIRLIQGGYALATTESDEPLDLMTATQKLLVDGCETMTAVLGMTGVISMFCHYIGRGFQWYLLTYDDEEKSLGTVSAVLFYILALQTGLTSLSPDKRFIRLCRNLCLLMTALLHFLHNIVSPILMSLSAARNPSRKRHVRALSVCAFLVVLSVSLLYHLWSQQSISTWLLAVTAFSVEVVVKVLVSLATYTLFLLDARRQFFWEKLDDYLYYVRAFGNSVEFCFGILLFINGAWILIFESAQNATGGGIRAIMMCIHAYFNIWCEARAGWSVFMKRRSAVHKISALPEATPAQLQAFDDVCAICYQEMYSAKITRCRHFFHGVCLRKWLYVQDRCPLCHEIMMYTDKADENAPEAEPAPAAQAEQPMRIYPRDDANNAAAQRRSPERAPVEASEQAPATSSSSAAATIGAEAVSAIVESAAAVGEARSLVSVASSSSATHRISASGSSDSSYMTASAQSPPPTATSAAAVATAAASNTTHMFRMSQDQQ.

The next 11 membrane-spanning stretches (helical) occupy residues 124 to 144 (TVKF…FMLW), 147 to 167 (HLVM…SYWS), 200 to 220 (VMSL…FAYI), 233 to 253 (MPII…AKVV), 256 to 276 (LPVV…MQSA), 350 to 370 (LVDG…ISMF), 392 to 412 (LGTV…LTSL), 425 to 445 (LCLL…PILM), 461 to 481 (ALSV…HLWS), 488 to 508 (WLLA…VSLA), and 539 to 559 (SVEF…LIFE). The RING-type; atypical zinc finger occupies 621 to 659 (CAICYQEMYSAKITRCRHFFHGVCLRKWLYVQDRCPLCH). Disordered stretches follow at residues 696-724 (NNAA…SSSA) and 752-788 (VASS…TSAA). Residues 711-724 (EASEQAPATSSSSA) show a composition bias toward low complexity.

In terms of assembly, interacts with VHL. Interacts with the MPN domain of CSN5. Interacts with EIF3F and EIF3H.

The protein resides in the endoplasmic reticulum membrane. In terms of biological role, plays a role in growth inhibition that is dependent upon COP9 signalosome subunits CSN5 and CSN6. May modulate signalosome levels or compartmentalization. Probably functions in the same or a related pathway to VHL during early midline development. This is Protein TRC8 homolog from Drosophila melanogaster (Fruit fly).